A 912-amino-acid polypeptide reads, in one-letter code: Probable dipeptidyl-aminopeptidase B (912 aa).

Residues 1–25 (MAAEKGESSDEERKPLTRDSMEYRD) are compositionally biased toward basic and acidic residues. 2 disordered regions span residues 1-31 (MAAE…NSLH) and 49-70 (GSTH…SDDG). Over 1 to 92 (MAAEKGESSD…GGKPVQKKVK (92 aa)) the chain is Cytoplasmic. The helical; Signal-anchor for type II membrane protein transmembrane segment at 93–113 (IVLGFLLFLCLSGWSLSFVLF) threads the bilayer. Residues 114–912 (LFGGHESSKT…RAAIWVGLSI (799 aa)) are Vacuolar-facing. N-linked (GlcNAc...) asparagine glycans are attached at residues asparagine 130, asparagine 210, asparagine 346, asparagine 569, and asparagine 656. Catalysis depends on serine 751, which acts as the Charge relay system. N-linked (GlcNAc...) asparagine glycosylation is present at asparagine 810. Catalysis depends on charge relay system residues aspartate 828 and histidine 861. A glycan (N-linked (GlcNAc...) asparagine) is linked at asparagine 897.

This sequence belongs to the peptidase S9B family.

The protein localises to the vacuole membrane. The catalysed reaction is Release of an N-terminal dipeptide, Xaa-Yaa-|-Zaa-, from a polypeptide, preferentially when Yaa is Pro, provided Zaa is neither Pro nor hydroxyproline.. Type IV dipeptidyl-peptidase which removes N-terminal dipeptides sequentially from polypeptides having unsubstituted N-termini provided that the penultimate residue is proline. The protein is Probable dipeptidyl-aminopeptidase B (DAPB) of Paracoccidioides lutzii (strain ATCC MYA-826 / Pb01) (Paracoccidioides brasiliensis).